A 224-amino-acid polypeptide reads, in one-letter code: dTDP-fucosamine acetyltransferase (224 aa).

Residues 94-224 (PALRQLASAA…VESTAYWLYR (131 aa)) enclose the N-acetyltransferase domain. Acetyl-CoA is bound by residues 168–174 (LAGRGAG), Asn201, and Arg207. Residue Tyr208 is the Proton donor of the active site.

Belongs to the WecD family. Homodimer.

It catalyses the reaction dTDP-4-amino-4,6-dideoxy-alpha-D-galactose + acetyl-CoA = dTDP-4-acetamido-4,6-dideoxy-alpha-D-galactose + CoA + H(+). It functions in the pathway bacterial outer membrane biogenesis; enterobacterial common antigen biosynthesis. Catalyzes the acetylation of dTDP-fucosamine (dTDP-4-amino-4,6-dideoxy-D-galactose) to dTDP-Fuc4NAc, which is utilized in the biosynthesis of the enterobacterial common antigen (ECA). This chain is dTDP-fucosamine acetyltransferase, found in Escherichia coli O6:H1 (strain CFT073 / ATCC 700928 / UPEC).